Consider the following 487-residue polypeptide: Protein FAM221B (487 aa).

2 stretches are compositionally biased toward polar residues: residues methionine 1–threonine 13 and histidine 36–histidine 48. 2 disordered regions span residues methionine 1 to threonine 103 and glutamine 132 to arginine 289. Residues proline 81–threonine 103 show a composition bias toward low complexity. 2 stretches are compositionally biased toward basic and acidic residues: residues glutamate 227–phenylalanine 236 and alanine 243–glutamate 253. Position 248 is a phosphoserine (serine 248).

Belongs to the FAM221 family.

This chain is Protein FAM221B (Fam221b), found in Mus musculus (Mouse).